Here is a 99-residue protein sequence, read N- to C-terminus: Large ribosomal subunit protein uL23 (99 aa).

Belongs to the universal ribosomal protein uL23 family. In terms of assembly, part of the 50S ribosomal subunit. Contacts protein L29, and trigger factor when it is bound to the ribosome.

Functionally, one of the early assembly proteins it binds 23S rRNA. One of the proteins that surrounds the polypeptide exit tunnel on the outside of the ribosome. Forms the main docking site for trigger factor binding to the ribosome. The polypeptide is Large ribosomal subunit protein uL23 (Francisella tularensis subsp. holarctica (strain OSU18)).